We begin with the raw amino-acid sequence, 271 residues long: Putative two-component membrane permease complex subunit SMU_746c (271 aa).

2 consecutive transmembrane segments (helical) span residues 34–54 (LAYI…TIWM) and 70–90 (FFSP…PTVP).

Belongs to the UPF0703 family. In terms of assembly, interacts with SMU_747c.

The protein resides in the cell membrane. Functionally, could be part of a two-component membrane permease system responsible for amino acid transport under low pH. Involved in acidogenesis, biofilm formation and low-pH survival. The sequence is that of Putative two-component membrane permease complex subunit SMU_746c from Streptococcus mutans serotype c (strain ATCC 700610 / UA159).